Here is a 441-residue protein sequence, read N- to C-terminus: NADH-quinone oxidoreductase subunit D 1 (441 aa).

The protein belongs to the complex I 49 kDa subunit family. NDH-1 is composed of 14 different subunits. Subunits NuoB, C, D, E, F, and G constitute the peripheral sector of the complex.

The protein localises to the cell membrane. The enzyme catalyses a quinone + NADH + 5 H(+)(in) = a quinol + NAD(+) + 4 H(+)(out). Functionally, NDH-1 shuttles electrons from NADH, via FMN and iron-sulfur (Fe-S) centers, to quinones in the respiratory chain. The immediate electron acceptor for the enzyme in this species is believed to be a menaquinone. Couples the redox reaction to proton translocation (for every two electrons transferred, four hydrogen ions are translocated across the cytoplasmic membrane), and thus conserves the redox energy in a proton gradient. This Salinispora arenicola (strain CNS-205) protein is NADH-quinone oxidoreductase subunit D 1.